Reading from the N-terminus, the 501-residue chain is Aspartyl/glutamyl-tRNA(Asn/Gln) amidotransferase subunit B (501 aa).

A disordered region spans residues V271–F299. The segment covering R288 to F299 has biased composition (basic and acidic residues).

The protein belongs to the GatB/GatE family. GatB subfamily. Heterotrimer of A, B and C subunits.

The enzyme catalyses L-glutamyl-tRNA(Gln) + L-glutamine + ATP + H2O = L-glutaminyl-tRNA(Gln) + L-glutamate + ADP + phosphate + H(+). The catalysed reaction is L-aspartyl-tRNA(Asn) + L-glutamine + ATP + H2O = L-asparaginyl-tRNA(Asn) + L-glutamate + ADP + phosphate + 2 H(+). Allows the formation of correctly charged Asn-tRNA(Asn) or Gln-tRNA(Gln) through the transamidation of misacylated Asp-tRNA(Asn) or Glu-tRNA(Gln) in organisms which lack either or both of asparaginyl-tRNA or glutaminyl-tRNA synthetases. The reaction takes place in the presence of glutamine and ATP through an activated phospho-Asp-tRNA(Asn) or phospho-Glu-tRNA(Gln). This Corynebacterium diphtheriae (strain ATCC 700971 / NCTC 13129 / Biotype gravis) protein is Aspartyl/glutamyl-tRNA(Asn/Gln) amidotransferase subunit B.